Reading from the N-terminus, the 375-residue chain is MNFSKLKFGATIGIIGGGQLGKMMAQSAQKMGYKVIVLDPNEDCPCRYVAHQFIHANYDDEQALNQLGENSDVVTYEFENISSEQLKKLTKLYHIPQGYQAIELLQDRLTEKQTLLEANTQIVPFVQIQTNQDLLKAIEKLGFPFIVKTRFGGYDGKGQILVRNDSELDEAYQLVEKQECVAEQYLDIQKEVSLTVTIGNEQQTTYFPLQENEHQNQILFKTVVPARSDKENEARKEVEKITRAIHFVGTFTVEFFIDKENNLYVNEIAPRPHNSGHYSIEACDYSQFDTHILAITGQKLPQAIELLKPTVMMNLLGRDLDLLENEFSRHPDWHIHIYGKKERKPDRKMGHMTLLTDDVNQTEQYMLMKFEGRDK.

ATP contacts are provided by residues Arg108, Lys148, 153 to 159 (GYDGKGQ), 183 to 186 (EQYL), Glu191, His214, and 266 to 267 (NE). In terms of domain architecture, ATP-grasp spans 112-296 (KQTLLEANTQ…QFDTHILAIT (185 aa)).

The protein belongs to the PurK/PurT family. As to quaternary structure, homodimer.

It carries out the reaction 5-amino-1-(5-phospho-beta-D-ribosyl)imidazole + hydrogencarbonate + ATP = 5-carboxyamino-1-(5-phospho-D-ribosyl)imidazole + ADP + phosphate + 2 H(+). It participates in purine metabolism; IMP biosynthesis via de novo pathway; 5-amino-1-(5-phospho-D-ribosyl)imidazole-4-carboxylate from 5-amino-1-(5-phospho-D-ribosyl)imidazole (N5-CAIR route): step 1/2. Its function is as follows. Catalyzes the ATP-dependent conversion of 5-aminoimidazole ribonucleotide (AIR) and HCO(3)(-) to N5-carboxyaminoimidazole ribonucleotide (N5-CAIR). The protein is N5-carboxyaminoimidazole ribonucleotide synthase of Staphylococcus epidermidis (strain ATCC 35984 / DSM 28319 / BCRC 17069 / CCUG 31568 / BM 3577 / RP62A).